We begin with the raw amino-acid sequence, 725 residues long: G-quartet DNA-binding protein TGP1 (725 aa).

Positions 241–258 (KKALTDVLQIHEKKERVH) match the Nuclear localization signal motif. 2 disordered regions span residues 252 to 284 (EKKERVHKQQNKNKNPRNAHKNHNRQRPNLQET) and 468 to 614 (EIHK…GKRG). A compositionally biased stretch (basic residues) spans 256–277 (RVHKQQNKNKNPRNAHKNHNRQ). A compositionally biased stretch (basic and acidic residues) spans 468–478 (EIHKIDRERKR). A compositionally biased stretch (low complexity) spans 517 to 544 (NKYKNTSVQNNNNNKNQQRSQSQNQRPP). The span at 545-564 (RNYDNRQGGENRNNRQRNEN) shows a compositional bias: basic and acidic residues. The span at 565-593 (NRNNFNGNGHRVNNQNNQRNRNSSYPRNN) shows a compositional bias: low complexity.

The N-terminus is blocked.

It is found in the nucleus. Functionally, binds specifically to parallel G4-DNA, a four-stranded structure stabilized by tetrads of hydrogen-bonded guanines. The sequence is that of G-quartet DNA-binding protein TGP1 (TGP1) from Tetrahymena thermophila.